The primary structure comprises 419 residues: uncharacterized protein (419 aa).

[4Fe-4S] cluster contacts are provided by C38, C44, C47, and C126. S-adenosyl-L-methionine contacts are provided by Q250, Y280, E301, and D346. The active-site Nucleophile is C373.

This sequence belongs to the class I-like SAM-binding methyltransferase superfamily. RNA M5U methyltransferase family.

This is an uncharacterized protein from Prochlorococcus marinus (strain SARG / CCMP1375 / SS120).